The following is a 193-amino-acid chain: CASP-like protein 1F3 (193 aa).

Positions 1-25 are disordered; the sequence is MASPQNTSQKRFFQANSPGGMPTAS. Topologically, residues 1–35 are cytoplasmic; the sequence is MASPQNTSQKRFFQANSPGGMPTASQSQRSRILAQ. Residues 36 to 56 form a helical membrane-spanning segment; sequence ITLRFLAIAFTVTAIPVMITA. Over 57 to 78 the chain is Extracellular; it reads KEPVSLLGLAITPSYKQSSAMK. A helical membrane pass occupies residues 79–99; that stretch reads FLLGVNATVFAFTALSMLFVW. Over 100–118 the chain is Cytoplasmic; the sequence is PLRRSGSKPINYFFLHLHD. A helical membrane pass occupies residues 119–139; it reads MVMTLLLISGCAAATAVGYLS. Topologically, residues 140 to 161 are extracellular; that stretch reads QYGQPETYWSPICDIVKKFCHQ. The helical transmembrane segment at 162-182 threads the bilayer; sequence MLISTVLSYLAFFCYLALNIL. At 183 to 193 the chain is on the cytoplasmic side; that stretch reads SVHKLMSRATE.

It belongs to the Casparian strip membrane proteins (CASP) family. As to quaternary structure, homodimer and heterodimers.

The protein resides in the cell membrane. The sequence is that of CASP-like protein 1F3 from Populus trichocarpa (Western balsam poplar).